Reading from the N-terminus, the 467-residue chain is Venom prothrombin activator pseutarin-C catalytic subunit (467 aa).

A signal peptide spans 1-22 (MAPQLLLCLILTFLWSLPEAES). Positions 23-40 (NVFLKSKVANRFLQRTKR) are excised as a propeptide. One can recognise a Gla domain in the interval 41–86 (ANSLVEEFKSGNIERECIEERCSKEEAREVFEDDEKTETFWNVYVD). 4-carboxyglutamate occurs at positions 46, 47, 54, 56, 59, 60, 65, 66, 69, and 72. A disulfide bridge links Cys-57 with Cys-62. One can recognise an EGF-like 1; calcium-binding domain in the interval 86 to 122 (DGDQCSSNPCHYRGICKDGIGSYTCTCLSGYEGKNCE). 11 disulfide bridges follow: Cys-90-Cys-101, Cys-95-Cys-110, Cys-112-Cys-121, Cys-129-Cys-140, Cys-136-Cys-149, Cys-151-Cys-164, Cys-172-Cys-329, Cys-216-Cys-221, Cys-236-Cys-252, Cys-377-Cys-391, and Cys-402-Cys-430. O-linked (Hex...) serine glycosylation occurs at Ser-92. An EGF-like 2 domain is found at 129 to 164 (CRVDNGNCWHFCKSVQNDIQCSCAEGYLLGEDGHSC). A propeptide spans 182–209 (REASLPDFVQSHNATLLKKSDNPSPDIR) (activation peptide). Residues 210-454 (IVNGMDCKLG…FIPWIKRIMR (245 aa)) form the Peptidase S1 domain. The Charge relay system role is filled by His-251. Asn-254 is a glycosylation site (N-linked (GlcNAc...) asparagine). The Charge relay system role is filled by Asp-309. The Charge relay system role is filled by Ser-406.

The protein belongs to the peptidase S1 family. Snake venom subfamily. As to quaternary structure, heterodimer of a light and a heavy chains; disulfide-linked. Is associated with pseutarin-C non-catalytic subunit (AC Q7SZN0) in a non-covalent manner. Gamma-carboxyglutamate residues are formed by vitamin K dependent carboxylation. These residues are essential for the binding of calcium. Expressed by the venom gland.

Its subcellular location is the secreted. The enzyme catalyses Selective cleavage of Arg-|-Thr and then Arg-|-Ile bonds in prothrombin to form thrombin.. Its activity is regulated as follows. Activated by calcium and negatively charged phospholipids. Snake prothrombin activator that attacks the hemostatic system of prey. This non-catalytic subunit is functionally similar to blood coagulation factor V. It serves as a critical cofactor for the prothrombinase activity of the catalytic subunit, which is similar to the blood coagulation factor X. The complex converts prothrombin to thrombin by sequential cleavage at two positions, Arg-320 followed by Arg-271. Cleavage at Arg-320 produces an active intermediate known as meizothrombin. Meizothrombin is the 'second' substrate for prothrombinase, and it docks in an altered manner to present the second cleavage site (271). Cleavage at Arg-271 releases active thrombin from its pro-fragment. This order of events is reversed if the protease component of prothrombinase is used on its own, suggesting that the 271 site is inherently more accessible to proteolysis. The complex converts prothrombin to thrombin in presence but also in the absence of membrane. In Pseudonaja textilis (Eastern brown snake), this protein is Venom prothrombin activator pseutarin-C catalytic subunit.